Here is a 281-residue protein sequence, read N- to C-terminus: Glycerol uptake facilitator protein (281 aa).

Over 1 to 5 (MSQTS) the chain is Cytoplasmic. Residues 6–34 (TLKGQCIAEFLGTGLLIFFGVGCVAALKV) traverse the membrane as a helical segment. The Periplasmic segment spans residues 35–39 (AGASF). The chain crosses the membrane as a helical span at residues 40–60 (GQWEISVIWGLGVAMAIYLTA). At 61 to 63 (GVS) the chain is on the cytoplasmic side. An intramembrane segment occupies 64–67 (GAHL). Residues 68–70 (NPA) carry the NPA 1 motif. Positions 68–78 (NPAVTIALWLF) form an intramembrane region, helical. Topologically, residues 79–84 (ACFDKR) are cytoplasmic. A helical transmembrane segment spans residues 85–108 (KVIPFIVSQVAGAFCAAALVYGLY). At 109–143 (YNLFFDFEQTHHIVRGSVESVDLAGTFSTYPNPHI) the chain is on the periplasmic side. The helical transmembrane segment at 144–169 (NFVQAFAVEMVITAILMGLILALTDD) threads the bilayer. Topologically, residues 170–177 (GNGVPRGP) are cytoplasmic. Residues 178–194 (LAPLLIGLLIAVIGASM) traverse the membrane as a helical segment. Topologically, residues 195 to 198 (GPLT) are periplasmic. Residues 199–202 (GFAM) lie within the membrane without spanning it. Positions 203 to 205 (NPA) match the NPA 2 motif. Positions 203–216 (NPARDFGPKVFAWL) form an intramembrane region, helical. At 217–231 (AGWGNVAFTGGRDIP) the chain is on the periplasmic side. Residues 232 to 254 (YFLVPLFSPIVGAIVGAFAYRKL) traverse the membrane as a helical segment. Topologically, residues 255 to 281 (IGRHLPCDICVVEEKETTTPSEQKASL) are cytoplasmic.

It belongs to the MIP/aquaporin (TC 1.A.8) family. In terms of assembly, homotetramer.

Its subcellular location is the cell inner membrane. It catalyses the reaction glycerol(in) = glycerol(out). Its function is as follows. Mediates glycerol diffusion across the cytoplasmic membrane via a pore-type mechanism. The chain is Glycerol uptake facilitator protein (glpF) from Shigella flexneri.